Reading from the N-terminus, the 404-residue chain is MASPRLGTFCCPTRDAATQLVLSFQPRAFHALCLGSGGLRLALGLLQLLPGRRPAGPGSPATSPPASVRILRAAAACDLLGCLGMVIRSTVWLGFPNFVDSVSDMNHTEIWPAAFCVGSAMWIQLLYSACFWWLFCYAVDAYLVIRRSAGLSTILLYHIMAWGLATLLCVEGAAMLYYPSVSRCERGLDHAIPHYVTMYLPLLLVLVANPILFQKTVTAVASLLKGRQGIYTENERRMGAVIKIRFFKIMLVLIICWLSNIINESLLFYLEMQTDINGGSLKPVRTAAKTTWFIMGILNPAQGFLLSLAFYGWTGCSLGFQSPRKEIQWESLTTSAAEGAHPSPLMPHENPASGKVSQVGGQTSDEALSMLSEGSDASTIEIHTASESCNKNEGDPALPTHGDL.

Residues 1–28 (MASPRLGTFCCPTRDAATQLVLSFQPRA) are Extracellular-facing. A helical transmembrane segment spans residues 29–49 (FHALCLGSGGLRLALGLLQLL). Residues 50-78 (PGRRPAGPGSPATSPPASVRILRAAAACD) lie on the Cytoplasmic side of the membrane. Residues 79-99 (LLGCLGMVIRSTVWLGFPNFV) form a helical membrane-spanning segment. The Extracellular portion of the chain corresponds to 100-124 (DSVSDMNHTEIWPAAFCVGSAMWIQ). A glycan (N-linked (GlcNAc...) asparagine) is linked at N106. Residues 125-145 (LLYSACFWWLFCYAVDAYLVI) form a helical membrane-spanning segment. Residues 146-149 (RRSA) lie on the Cytoplasmic side of the membrane. Residues 150–170 (GLSTILLYHIMAWGLATLLCV) form a helical membrane-spanning segment. At 171-191 (EGAAMLYYPSVSRCERGLDHA) the chain is on the extracellular side. Residues 192-212 (IPHYVTMYLPLLLVLVANPIL) form a helical membrane-spanning segment. Residues 213 to 248 (FQKTVTAVASLLKGRQGIYTENERRMGAVIKIRFFK) lie on the Cytoplasmic side of the membrane. The segment at 221–238 (ASLLKGRQGIYTENERRM) is necessary for its G protein-activation ability and normal distribution of melanosomes. A lysosomal/melanosomal membrane localization signal motif is present at residues 222–231 (SLLKGRQGIY). Residues 249-269 (IMLVLIICWLSNIINESLLFY) traverse the membrane as a helical segment. The Extracellular portion of the chain corresponds to 270–292 (LEMQTDINGGSLKPVRTAAKTTW). The helical transmembrane segment at 293–313 (FIMGILNPAQGFLLSLAFYGW) threads the bilayer. The Cytoplasmic portion of the chain corresponds to 314–404 (TGCSLGFQSP…DPALPTHGDL (91 aa)). The lysosomal/melanosomal membrane localization signal motif lies at 329 to 330 (WE). A disordered region spans residues 338 to 404 (EGAHPSPLMP…DPALPTHGDL (67 aa)). Polar residues predominate over residues 355–366 (KVSQVGGQTSDE).

Belongs to the G-protein coupled receptor OA family. Interacts with heterotrimeric G(i) proteins. Interacts with ARRB1 and ARRB2. Interacts with MLANA. Post-translationally, glycosylated. In terms of processing, phosphorylated. As to expression, expressed at high levels in the retina, including the retinal pigment epithelium (RPE), and in melanocytes. Weak expression is observed in brain and adrenal gland.

It is found in the melanosome membrane. The protein resides in the lysosome membrane. It localises to the apical cell membrane. Functionally, receptor for tyrosine, L-DOPA and dopamine. After binding to L-DOPA, stimulates Ca(2+) influx into the cytoplasm, increases secretion of the neurotrophic factor SERPINF1 and relocalizes beta arrestin at the plasma membrane; this ligand-dependent signaling occurs through a G(q)-mediated pathway in melanocytic cells. Its activity is mediated by G proteins which activate the phosphoinositide signaling pathway. Also plays a role as an intracellular G protein-coupled receptor involved in melanosome biogenesis, organization and transport. The protein is G-protein coupled receptor 143 (GPR143) of Homo sapiens (Human).